Consider the following 412-residue polypeptide: DNA polymerase IV (412 aa).

In terms of domain architecture, UmuC spans 12–193; the sequence is ILHVDMNCFF…LPVGAMHGIG (182 aa). The Mg(2+) site is built by D16 and D112. E113 is a catalytic residue. Residues 235–257 form a disordered region; the sequence is KGMDDREVDPSQMGQHKSVGNSM. Residues 246–257 show a composition bias toward polar residues; the sequence is QMGQHKSVGNSM.

Belongs to the DNA polymerase type-Y family. Monomer. Requires Mg(2+) as cofactor.

Its subcellular location is the cytoplasm. The catalysed reaction is DNA(n) + a 2'-deoxyribonucleoside 5'-triphosphate = DNA(n+1) + diphosphate. Its function is as follows. Poorly processive, error-prone DNA polymerase involved in untargeted mutagenesis. Copies undamaged DNA at stalled replication forks, which arise in vivo from mismatched or misaligned primer ends. These misaligned primers can be extended by PolIV. Exhibits no 3'-5' exonuclease (proofreading) activity. May be involved in translesional synthesis, in conjunction with the beta clamp from PolIII. In Bacillus anthracis, this protein is DNA polymerase IV.